Consider the following 316-residue polypeptide: Small ribosomal subunit protein RACK1 (316 aa).

WD repeat units follow at residues 4-46 (QMTL…WRLT), 52-93 (YGVP…WDLS), 94-135 (TGQT…WNTL), 137-180 (VCKY…WNLT), 181-221 (NCKL…LWDL), 222-263 (NEGK…WDLE), and 264-312 (GKVV…WQVS).

This sequence belongs to the WD repeat G protein beta family. Ribosomal protein RACK1 subfamily.

The polypeptide is Small ribosomal subunit protein RACK1 (Biomphalaria glabrata (Bloodfluke planorb)).